A 214-amino-acid chain; its full sequence is Phosphatidylcholine transfer protein (214 aa).

Position 1 is an N-acetylmethionine (M1). Positions 1-212 (MELAAGSFSE…MARACQNYLK (212 aa)) constitute an START domain. A 1,2-diacyl-sn-glycero-3-phosphocholine contacts are provided by Y72 and R78. At S139 the chain carries Phosphoserine. Q157 lines the a 1,2-diacyl-sn-glycero-3-phosphocholine pocket.

As to quaternary structure, interacts with ACOT13/THEM2. Highest expression in liver, placenta, testis, kidney and heart. Low levels in brain and lung. No expression detected in thymus.

The protein resides in the cytoplasm. Catalyzes the transfer of phosphatidylcholine between membranes. Binds a single lipid molecule. In Homo sapiens (Human), this protein is Phosphatidylcholine transfer protein (PCTP).